The primary structure comprises 486 residues: Cardiolipin synthase A (486 aa).

A run of 2 helical transmembrane segments spans residues 3–23 and 38–58; these read TFYTVVNWLVILGYWLLIAGV and MAWLLIIYILPLVGIIAYLSF. PLD phosphodiesterase domains follow at residues 219–246 and 399–426; these read MDLRQHRKMVMIDNYIAYTGSMNMVDPR and EGGLLHTKSVLVDGELSLVGTVNLDMRS. Catalysis depends on residues His-224, Lys-226, Asp-231, His-404, Lys-406, and Asp-411.

It belongs to the phospholipase D family. Cardiolipin synthase subfamily. ClsA sub-subfamily.

Its subcellular location is the cell inner membrane. It catalyses the reaction 2 a 1,2-diacyl-sn-glycero-3-phospho-(1'-sn-glycerol) = a cardiolipin + glycerol. Functionally, catalyzes the reversible phosphatidyl group transfer from one phosphatidylglycerol molecule to another to form cardiolipin (CL) (diphosphatidylglycerol) and glycerol. The sequence is that of Cardiolipin synthase A from Klebsiella pneumoniae subsp. pneumoniae (strain ATCC 700721 / MGH 78578).